A 122-amino-acid chain; its full sequence is Large ribosomal subunit protein uL14c (122 aa).

It belongs to the universal ribosomal protein uL14 family. Part of the 50S ribosomal subunit.

The protein localises to the plastid. It localises to the chloroplast. Its function is as follows. Binds to 23S rRNA. This Mesostigma viride (Green alga) protein is Large ribosomal subunit protein uL14c.